The sequence spans 302 residues: Methylsterol monooxygenase erg25A (302 aa).

An N-linked (GlcNAc...) asparagine glycan is attached at asparagine 5. A run of 3 helical transmembrane segments spans residues 47-67, 105-125, and 132-152; these read NIVA…IYFS, YILL…HPMM, and FTIP…FFLL. Residues 147–283 enclose the Fatty acid hydroxylase domain; that stretch reads IIFFLLEDTY…FRHWDVLMGT (137 aa). Positions 161-165 match the Histidine box-1 motif; sequence HRAMH. Residues 174-178 carry the Histidine box-2 motif; sequence HRIHH. The chain crosses the membrane as a helical span at residues 193–213; sequence PWETLLLGLGTIGPPLLLALM. The Histidine box-3 motif lies at 258-264; the sequence is WHDDHHR. Residue asparagine 269 is glycosylated (N-linked (GlcNAc...) asparagine).

It belongs to the sterol desaturase family. Requires Fe cation as cofactor.

The protein localises to the endoplasmic reticulum membrane. The protein operates within steroid metabolism; ergosterol biosynthesis. In terms of biological role, sterol-C4-methyl oxidase; part of the third module of ergosterol biosynthesis pathway that includes the late steps of the pathway. Erg25A is a catalytic component of the C-4 demethylation complex that catalyzes the conversion of 4,4-dimethylfecosterol into fecosterol via 4-methylfecosterol. The third module or late pathway involves the ergosterol synthesis itself through consecutive reactions that mainly occur in the endoplasmic reticulum (ER) membrane. Firstly, the squalene synthase erg9 catalyzes the condensation of 2 farnesyl pyrophosphate moieties to form squalene, which is the precursor of all steroids. Squalene synthase is crucial for balancing the incorporation of farnesyl diphosphate (FPP) into sterol and nonsterol isoprene synthesis. Secondly, squalene is converted into lanosterol by the consecutive action of the squalene epoxidase erg1 and the lanosterol synthase erg7. Then, the delta(24)-sterol C-methyltransferase erg6 methylates lanosterol at C-24 to produce eburicol. Eburicol is the substrate of the sterol 14-alpha demethylase encoded by cyp51A and cyp51B, to yield 4,4,24-trimethyl ergosta-8,14,24(28)-trienol. The C-14 reductase erg24 then reduces the C14=C15 double bond which leads to 4,4-dimethylfecosterol. A sequence of further demethylations at C-4, involving the C-4 demethylation complex containing the C-4 methylsterol oxidases erg25A or erg25B, the sterol-4-alpha-carboxylate 3-dehydrogenase erg26 and the 3-keto-steroid reductase erg27, leads to the production of fecosterol via 4-methylfecosterol. The C-8 sterol isomerase erg2 then catalyzes the reaction which results in unsaturation at C-7 in the B ring of sterols and thus converts fecosterol to episterol. The sterol-C5-desaturase erg3B then catalyzes the introduction of a C-5 double bond in the B ring to produce 5-dehydroepisterol. The 2 other sterol-C5-desaturases, erg3A and erg3C, seem to be less important in ergosterol biosynthesis. The C-22 sterol desaturase erg5 further converts 5-dehydroepisterol into ergosta-5,7,22,24(28)-tetraen-3beta-ol by forming the C-22(23) double bond in the sterol side chain. Finally, ergosta-5,7,22,24(28)-tetraen-3beta-ol is substrate of the C-24(28) sterol reductases erg4A and erg4B to produce ergosterol. Possible alternative sterol biosynthetic pathways might exist from fecosterol to ergosterol, depending on the activities of the erg3 isoforms. The chain is Methylsterol monooxygenase erg25A from Aspergillus fumigatus (strain ATCC MYA-4609 / CBS 101355 / FGSC A1100 / Af293) (Neosartorya fumigata).